Here is a 613-residue protein sequence, read N- to C-terminus: Na(+)/H(+) antiporter NhaA 1 (613 aa).

A disordered region spans residues 1–23 (MTEASARTIGPLPSRFSRDPKTP). Residues 1 to 408 (MTEASARTIG…DPARQDEARV (408 aa)) are na(+)/H(+) antiporter NhaA. 11 helical membrane passes run 29–49 (AAAALLLAFTVLAILWANSPW), 81–101 (GLMAFFFFIVGLEVKSEFVIG), 110–130 (AVPVVAAIAGLIVPAVIFLTF), 138–158 (QAWGVVISTDTAFLVGALAVI), 168–188 (IFLLTLAVVDDVGALGAIALF), 191–211 (DDLKLAPLAVAALLIAALAMV), 231–251 (IALYLAHVHPTLAGVAVAVLI), 300–320 (AVGPYVSFVVLPIFALANAGV), 337–357 (WGIVAGLVVGKFVGITAATAL), 377–397 (GGAALSGIGFTISLFIVDVAI), and 408–428 (VGVLIASVLAFTLSWALFRIT). Residues 409–613 (GVLIASVLAF…SLIRALEAGR (205 aa)) enclose the Thioredoxin domain.

In the N-terminal section; belongs to the NhaA Na(+)/H(+) (TC 2.A.33) antiporter family.

The protein resides in the cell membrane. It carries out the reaction Na(+)(in) + 2 H(+)(out) = Na(+)(out) + 2 H(+)(in). Na(+)/H(+) antiporter that extrudes sodium in exchange for external protons. The chain is Na(+)/H(+) antiporter NhaA 1 from Mycobacterium sp. (strain KMS).